The chain runs to 575 residues: Transmembrane protein 108 (575 aa).

The chain crosses the membrane as a helical span at residues 9–29 (YCQLLSFLLILALTEALAFAI). Residues 31-169 (EPSPRESLQV…TTTRRPPRPP (139 aa)) form an interaction with SH3GL2 region. The disordered stretch occupies residues 65-398 (MLTPNPDGPP…PSRVSESTIS (334 aa)). Positions 74–87 (PSQAAAPMATPTPR) are enriched in low complexity. Residues 95–115 (HTISTIAATVTAPHSESSLST) are compositionally biased toward polar residues. Residues 146 to 160 (PPGATSRPTTAPPRT) are compositionally biased toward low complexity. Positions 173-407 (RKGAGNSSRP…SGAKEETVAT (235 aa)) are interaction with DST (isoform 1). Residues 244 to 271 (YSSSPQPQTVAATTVPSNTSWAPTTTSL) show a composition bias toward polar residues. The span at 290–318 (TFTSQGGTPDATAASGAPVSPQAAPVPSQ) shows a compositional bias: low complexity. Residues 329–352 (PSHSDSWLTVTPGTSRPLSTSSGV) are compositionally biased toward polar residues. The segment covering 353 to 366 (FTAATGPTPAAFDT) has biased composition (low complexity). The span at 367-398 (SVSAPSQGIPQGASTTPQAPTHPSRVSESTIS) shows a compositional bias: polar residues. A helical membrane pass occupies residues 469–489 (IAWVILAISVPISSCSVLLTV). The segment at 490–575 (CCMKRKKKTA…FVGNDQVSEI (86 aa)) is interaction with CYFIP2.

Interacts with DST (isoform 1). Interacts with SH3GL2. Interacts (via N-terminus) with CYFIP1 and CYFIP2; the interactions associate TMEM108 with the WAVE1 complex. In terms of processing, glycosylated.

Its subcellular location is the membrane. The protein localises to the postsynaptic density. It is found in the endosome membrane. The protein resides in the cell projection. It localises to the axon. Its subcellular location is the dendrite. The protein localises to the early endosome. Transmembrane protein required for proper cognitive functions. Involved in the development of dentate gyrus (DG) neuron circuitry, is necessary for AMPA receptors surface expression and proper excitatory postsynaptic currents of DG granule neurons. Regulates the organization and stability of the microtubule network of sensory neurons to allow axonal transport. Through the interaction with DST, mediates the docking of the dynein/dynactin motor complex to vesicle cargos for retrograde axonal transport. In hippocampal neurons, required for BDNF-dependent dendrite outgrowth. Cooperates with SH3GL2 and recruits the WAVE1 complex to facilitate actin-dependent BDNF:NTRK2 early endocytic trafficking and mediate signaling from early endosomes. This is Transmembrane protein 108 from Homo sapiens (Human).